We begin with the raw amino-acid sequence, 134 residues long: MLRKAIADIQAKYVRKDVPELRSGDSVRVHTKIKEGDKERIQVFEGVVIAYRRGTPGSSMFTVRKMSYGVGVERMFPVHSPRIDRIEVTGHGEVRRSRLYYLRGLQGKAARLHQEEGPSSAAPASTPPAAAPQA.

The interval 110–134 (ARLHQEEGPSSAAPASTPPAAAPQA) is disordered. Positions 125 to 134 (STPPAAAPQA) are enriched in pro residues.

This sequence belongs to the bacterial ribosomal protein bL19 family.

In terms of biological role, this protein is located at the 30S-50S ribosomal subunit interface and may play a role in the structure and function of the aminoacyl-tRNA binding site. This chain is Large ribosomal subunit protein bL19, found in Anaeromyxobacter sp. (strain Fw109-5).